The following is a 687-amino-acid chain: MLLSRHRERLAANLQETAKDAGERWELSAPTFTRHCPKTARMAHPFIGVVHRINSYSSVLETYCTRHHPATPTSANPDVGTPRPSEDNVPAKPRLLESLSTYLQMRCVREDAHVSTADQLVEYQAARKTHDSLHACSVYRELQAFLVNLSSFLNGCYVPGVHWLEPFQQQLVMHTFFFLVSIKAPQKTHQLFGLFKQYFGLFETPNSVLQTFKQKASVFLIPRRHGKTWIVVAIISMLLASVENINIGYVAHQKHVANSVFAEIIKTLCRWFPPKNLNIKKENGTIIYTRPGGRSSSLMCATCFNKNSIRGQTFNLLYVDEANFIKKDALPAILGFMLQKDAKLIFISSVNSSDRSTSFLLNLRNAQEKMLNVVSYVCADHREDFHLQDALVSCPCYRLHIPTYITIDESIKTTTNLFMEGAFDTELMGEGAASSNATLYRVVGDAALTQFDMCRVDTTAQQVQKCLGKQLFVYIDPAYTNNTEASGTGVGAVVTSTQTPTRSLILGMEHFFLRDLTGAAAYEIASCACTMIKAIAVLHPTIERVNAAVEGNSSQDSGVAIATVLNEICPLPIHFLHYTDKSSALQWPIYMLGGEKSSAFETFIYALNSGTLSASQTVVSNTIKISFDPVTYLVEQVRAIKCVPLRDGGQSYSAKQKHMSDDLLVAVVMAHFMATDDRHMYKPISPQ.

The segment at 67–91 is disordered; sequence HHPATPTSANPDVGTPRPSEDNVPA. The Walker A motif signature appears at 221–228; the sequence is IPRRHGKT. Positions 316–321 match the Walker B motif motif; it reads LLYVDE. Glu-321 serves as the catalytic For ATPase activity. Active-site for nuclease activity residues include Asp-476, Glu-550, and Asp-662.

Belongs to the herpesviridae TRM3 protein family. Interacts with the terminase subunits TRM1 and TRM2. Interacts with portal protein.

Its subcellular location is the host nucleus. Its function is as follows. Component of the molecular motor that translocates viral genomic DNA in empty capsid during DNA packaging. Forms a tripartite terminase complex together with TRM1 and TRM2 in the host cytoplasm. Once the complex reaches the host nucleus, it interacts with the capsid portal vertex. This portal forms a ring in which genomic DNA is translocated into the capsid. TRM3 carries an RNase H-like nuclease activity that plays an important role for the cleavage of concatemeric viral DNA into unit length genomes. This Human herpesvirus 8 type P (isolate GK18) (HHV-8) protein is Tripartite terminase subunit 3.